The following is a 418-amino-acid chain: Metacaspase-2 (418 aa).

The tract at residues 68–113 is disordered; the sequence is PSPYTHAPHAPSPFNHAPPDSYPFTHAPPASSPFNHAPPGPPPPVH. The segment covering 70-80 has biased composition (low complexity); that stretch reads PYTHAPHAPSP. Residues 103–112 show a composition bias toward pro residues; sequence HAPPGPPPPV. Catalysis depends on residues His200 and Cys256. The interval 385–406 is disordered; it reads PDEEEEVNQAPQKTQEPQLSAN. The span at 393-405 shows a compositional bias: polar residues; it reads QAPQKTQEPQLSA.

The protein belongs to the peptidase C14B family.

Its function is as follows. Acts as a negative regulator of oxidative stress cell death and hypersensitive cell death response mediated by immune response. Acts via indirect or direct regulation of AMC1 at postranscriptional level. This is Metacaspase-2 (AMC2) from Arabidopsis thaliana (Mouse-ear cress).